Reading from the N-terminus, the 509-residue chain is Lanosterol 14-alpha demethylase (509 aa).

A helical transmembrane segment spans residues 30–50 (GNLLSMLLIACAFTLSLVYLI). Cys-455 provides a ligand contact to heme.

Belongs to the cytochrome P450 family. Heme is required as a cofactor. In terms of processing, ubiquitinated by MARCHF6, leading to proteasomal degradation. Ubiquitously expressed with highest levels in testis, ovary, adrenal, prostate, liver, kidney and lung.

The protein localises to the endoplasmic reticulum membrane. It is found in the microsome membrane. The catalysed reaction is a 14alpha-methyl steroid + 3 reduced [NADPH--hemoprotein reductase] + 3 O2 = a Delta(14) steroid + formate + 3 oxidized [NADPH--hemoprotein reductase] + 4 H2O + 4 H(+). It catalyses the reaction lanosterol + 3 reduced [NADPH--hemoprotein reductase] + 3 O2 = 4,4-dimethyl-5alpha-cholesta-8,14,24-trien-3beta-ol + formate + 3 oxidized [NADPH--hemoprotein reductase] + 4 H2O + 4 H(+). It carries out the reaction 24,25-dihydrolanosterol + 3 reduced [NADPH--hemoprotein reductase] + 3 O2 = 4,4-dimethyl-8,14-cholestadien-3beta-ol + formate + 3 oxidized [NADPH--hemoprotein reductase] + 4 H2O + 4 H(+). The enzyme catalyses a 14alpha-methyl steroid + reduced [NADPH--hemoprotein reductase] + O2 = a 14alpha-hydroxymethyl steroid + oxidized [NADPH--hemoprotein reductase] + H2O + H(+). The catalysed reaction is a 14alpha-hydroxymethyl steroid + reduced [NADPH--hemoprotein reductase] + O2 = a 14alpha-formyl steroid + oxidized [NADPH--hemoprotein reductase] + 2 H2O + H(+). It catalyses the reaction a 14alpha-formyl steroid + reduced [NADPH--hemoprotein reductase] + O2 = a Delta(14) steroid + formate + oxidized [NADPH--hemoprotein reductase] + H2O + 2 H(+). It carries out the reaction lanosterol + reduced [NADPH--hemoprotein reductase] + O2 = 32-hydroxylanosterol + oxidized [NADPH--hemoprotein reductase] + H2O + H(+). The enzyme catalyses 32-hydroxylanosterol + reduced [NADPH--hemoprotein reductase] + O2 = 32-oxolanosterol + oxidized [NADPH--hemoprotein reductase] + 2 H2O + H(+). The catalysed reaction is 32-oxolanosterol + reduced [NADPH--hemoprotein reductase] + O2 = 4,4-dimethyl-5alpha-cholesta-8,14,24-trien-3beta-ol + formate + oxidized [NADPH--hemoprotein reductase] + H2O + 2 H(+). It catalyses the reaction 24,25-dihydrolanosterol + reduced [NADPH--hemoprotein reductase] + O2 = 32-hydroxy-24,25-dihydrolanosterol + oxidized [NADPH--hemoprotein reductase] + H2O + H(+). It carries out the reaction 32-hydroxy-24,25-dihydrolanosterol + reduced [NADPH--hemoprotein reductase] + O2 = 32-oxo-24,25-dihydrolanosterol + oxidized [NADPH--hemoprotein reductase] + 2 H2O + H(+). The enzyme catalyses 32-oxo-24,25-dihydrolanosterol + reduced [NADPH--hemoprotein reductase] + O2 = 4,4-dimethyl-8,14-cholestadien-3beta-ol + formate + oxidized [NADPH--hemoprotein reductase] + H2O + 2 H(+). It participates in steroid biosynthesis; zymosterol biosynthesis; zymosterol from lanosterol: step 1/6. Its activity is regulated as follows. Inhibited by azalanstat. Inhibited by azole antifungal agents ketoconazole, itraconazole and fluconazole. Its function is as follows. Sterol 14alpha-demethylase that plays a critical role in the cholesterol biosynthesis pathway, being cholesterol the major sterol component in mammalian membranes as well as a precursor for bile acid and steroid hormone synthesis. Cytochrome P450 monooxygenase that catalyzes the three-step oxidative removal of the 14alpha-methyl group (C-32) of sterols such as lanosterol (lanosta-8,24-dien-3beta-ol) and 24,25-dihydrolanosterol (DHL) in the form of formate, and converts the sterols to 4,4-dimethyl-5alpha-cholesta-8,14,24-trien-3beta-ol and 4,4-dimethyl-8,14-cholestadien-3beta-ol, respectively, which are intermediates of cholesterol biosynthesis. Can also demethylate substrates not intrinsic to mammals, such as eburicol (24-methylene-24,25-dihydrolanosterol), but at a lower rate than DHL. This Homo sapiens (Human) protein is Lanosterol 14-alpha demethylase.